We begin with the raw amino-acid sequence, 200 residues long: 3-isopropylmalate dehydratase small subunit (200 aa).

The protein belongs to the LeuD family. LeuD type 1 subfamily. In terms of assembly, heterodimer of LeuC and LeuD.

The enzyme catalyses (2R,3S)-3-isopropylmalate = (2S)-2-isopropylmalate. The protein operates within amino-acid biosynthesis; L-leucine biosynthesis; L-leucine from 3-methyl-2-oxobutanoate: step 2/4. Its function is as follows. Catalyzes the isomerization between 2-isopropylmalate and 3-isopropylmalate, via the formation of 2-isopropylmaleate. The polypeptide is 3-isopropylmalate dehydratase small subunit (Actinobacillus succinogenes (strain ATCC 55618 / DSM 22257 / CCUG 43843 / 130Z)).